The primary structure comprises 1102 residues: Carbamoyl phosphate synthase large chain (1102 aa).

The tract at residues 1 to 402 (MPKRTDLKSV…ALQKALRSLE (402 aa)) is carboxyphosphate synthetic domain. ATP is bound by residues Arg-129, Arg-169, Gly-175, Gly-176, Glu-208, Ile-210, Glu-215, Gly-241, Val-242, His-243, Gln-285, and Glu-299. Positions 133-328 (KGVVERCGAE…IAKIATKLSL (196 aa)) constitute an ATP-grasp 1 domain. Residues Gln-285, Glu-299, and Asn-301 each coordinate Mg(2+). Mn(2+) is bound by residues Gln-285, Glu-299, and Asn-301. The segment at 403 to 546 (QKGSQLDFSS…YHYSSYDEED (144 aa)) is oligomerization domain. The carbamoyl phosphate synthetic domain stretch occupies residues 547–950 (EVGLHAKPSV…AFAKSQAAAN (404 aa)). Positions 677-868 (ARVLDEAGLT…MAKAAALIGT (192 aa)) constitute an ATP-grasp 2 domain. ATP contacts are provided by Arg-713, Arg-752, Leu-754, Glu-759, Gly-784, Ile-785, His-786, Ser-787, Gln-827, and Glu-839. Residues Gln-827, Glu-839, and Asn-841 each contribute to the Mg(2+) site. 3 residues coordinate Mn(2+): Gln-827, Glu-839, and Asn-841. Residues 951–1096 (NALPTEGKIF…QEHAANLSAA (146 aa)) form the MGS-like domain. The tract at residues 951-1102 (NALPTEGKIF…LSAAMEAANA (152 aa)) is allosteric domain.

Belongs to the CarB family. Composed of two chains; the small (or glutamine) chain promotes the hydrolysis of glutamine to ammonia, which is used by the large (or ammonia) chain to synthesize carbamoyl phosphate. Tetramer of heterodimers (alpha,beta)4. Mg(2+) is required as a cofactor. The cofactor is Mn(2+).

The enzyme catalyses hydrogencarbonate + L-glutamine + 2 ATP + H2O = carbamoyl phosphate + L-glutamate + 2 ADP + phosphate + 2 H(+). It carries out the reaction hydrogencarbonate + NH4(+) + 2 ATP = carbamoyl phosphate + 2 ADP + phosphate + 2 H(+). Its pathway is amino-acid biosynthesis; L-arginine biosynthesis; carbamoyl phosphate from bicarbonate: step 1/1. It participates in pyrimidine metabolism; UMP biosynthesis via de novo pathway; (S)-dihydroorotate from bicarbonate: step 1/3. Large subunit of the glutamine-dependent carbamoyl phosphate synthetase (CPSase). CPSase catalyzes the formation of carbamoyl phosphate from the ammonia moiety of glutamine, carbonate, and phosphate donated by ATP, constituting the first step of 2 biosynthetic pathways, one leading to arginine and/or urea and the other to pyrimidine nucleotides. The large subunit (synthetase) binds the substrates ammonia (free or transferred from glutamine from the small subunit), hydrogencarbonate and ATP and carries out an ATP-coupled ligase reaction, activating hydrogencarbonate by forming carboxy phosphate which reacts with ammonia to form carbamoyl phosphate. This is Carbamoyl phosphate synthase large chain from Paenarthrobacter aurescens (strain TC1).